Here is a 256-residue protein sequence, read N- to C-terminus: tRNA-cytidine(32) 2-sulfurtransferase (256 aa).

Residues 35 to 40 (SGGKDS) carry the PP-loop motif motif. The [4Fe-4S] cluster site is built by C110, C113, and C201.

Belongs to the TtcA family. Homodimer. Mg(2+) is required as a cofactor. The cofactor is [4Fe-4S] cluster.

It is found in the cytoplasm. The enzyme catalyses cytidine(32) in tRNA + S-sulfanyl-L-cysteinyl-[cysteine desulfurase] + AH2 + ATP = 2-thiocytidine(32) in tRNA + L-cysteinyl-[cysteine desulfurase] + A + AMP + diphosphate + H(+). The protein operates within tRNA modification. In terms of biological role, catalyzes the ATP-dependent 2-thiolation of cytidine in position 32 of tRNA, to form 2-thiocytidine (s(2)C32). The sulfur atoms are provided by the cysteine/cysteine desulfurase (IscS) system. The protein is tRNA-cytidine(32) 2-sulfurtransferase of Coxiella burnetii (strain CbuG_Q212) (Coxiella burnetii (strain Q212)).